The sequence spans 425 residues: MANTEAFFSQTLAERDPELFATITEEQERQETGIELIASENITSKAVLEAQGSVLTNKYAEGYPHRRYYGGCEAVDVTEQLAIDRAKKLFNCEFVNVQPHSGAQANGAVMLALLQPGDTIMGMSLSSGGHLTHGAAPAQSGKWFNAVQYEVSPETLLIDYDAIEAQALECKPKMIIAGGSAIPRQIDFKRFREIADKVGAYLFVDMAHIAGLVATGVHPSPLPHAHVVTTTTHKTLRGPRGGMILSNDLDLGKKINSAVFPGYQGGPLMHVIAGKAVAFGEALKPEFTDYIKQVVANAKALAEVMVERGCDIVTGGTDTHLMLVDLRPKGLKGNAADAALERAGITCNKNGIPFDTEKPMVTSGIRLGTPAATSRGFGIEEFQKVGHLISDVLDGLVEMPEGNPEVEARVLAEVRELCKRFPLYR.

(6S)-5,6,7,8-tetrahydrofolate contacts are provided by residues Leu-125 and 129–131; that span reads GHL. Residue Lys-234 is modified to N6-(pyridoxal phosphate)lysine.

Belongs to the SHMT family. In terms of assembly, homodimer. Requires pyridoxal 5'-phosphate as cofactor.

It localises to the cytoplasm. The catalysed reaction is (6R)-5,10-methylene-5,6,7,8-tetrahydrofolate + glycine + H2O = (6S)-5,6,7,8-tetrahydrofolate + L-serine. It participates in one-carbon metabolism; tetrahydrofolate interconversion. It functions in the pathway amino-acid biosynthesis; glycine biosynthesis; glycine from L-serine: step 1/1. Catalyzes the reversible interconversion of serine and glycine with tetrahydrofolate (THF) serving as the one-carbon carrier. This reaction serves as the major source of one-carbon groups required for the biosynthesis of purines, thymidylate, methionine, and other important biomolecules. Also exhibits THF-independent aldolase activity toward beta-hydroxyamino acids, producing glycine and aldehydes, via a retro-aldol mechanism. The chain is Serine hydroxymethyltransferase from Marinomonas sp. (strain MWYL1).